A 289-amino-acid polypeptide reads, in one-letter code: Aquaporin PIP2-3 (289 aa).

The disordered stretch occupies residues 1-25; sequence MAKQDIEASGPEAGEFSAKDYTDPP. The next 2 helical transmembrane spans lie at 43–63 and 80–100; these read AVIA…ATVI and CGGV…FILV. An NPA 1 motif is present at residues 112–114; the sequence is NPA. Helical transmembrane passes span 131–151, 173–193, and 207–227; these read LLYI…VKGF, GTGL…VFSA, and VLAP…TIPI. The short motif at 233-235 is the NPA 2 element; that stretch reads NPA. A helical membrane pass occupies residues 255 to 275; that stretch reads IFWVGPLIGAAIAAAYHQYVL.

This sequence belongs to the MIP/aquaporin (TC 1.A.8) family. PIP (TC 1.A.8.11) subfamily.

It is found in the cell membrane. Its function is as follows. Aquaporins facilitate the transport of water and small neutral solutes across cell membranes. The protein is Aquaporin PIP2-3 (PIP2-3) of Zea mays (Maize).